A 108-amino-acid polypeptide reads, in one-letter code: Thaicobrin (108 aa).

Positions 1-108 (SPPGNWQKAD…IWQKGLWWLG (108 aa)) constitute a B30.2/SPRY domain.

The protein belongs to the ohanin/vespryn family. As to expression, expressed by the venom gland.

It is found in the secreted. Neurotoxin that produces dose-dependent hypolocomotion and hyperalgesia in mice. May directly act on the central nervous system, as it is 6500-fold more potent when administered intracerebroventricularly than intraperitoneal. This is Thaicobrin from Naja kaouthia (Monocled cobra).